Consider the following 523-residue polypeptide: Maintenance of mitochondrial morphology protein 1 (523 aa).

The Lumenal portion of the chain corresponds to 1–43 (MAGSTSASLQTPYFPSSTQINPVRVDHTLPLPPSQPSLSFTQG). Residues 44–64 (LLVGQLSVVLLIGAFIKFFIF) traverse the membrane as a helical segment. At 65 to 523 (GEAPPPPSRG…GSMPDTVTET (459 aa)) the chain is on the cytoplasmic side. Disordered regions lie at residues 70 to 118 (PPSR…SSST), 128 to 147 (YYSA…RLYH), 295 to 349 (TSDQ…SKHG), 420 to 474 (RTGL…DRGL), and 492 to 523 (GGHQ…VTET). Polar residues-rich tracts occupy residues 74-96 (GLSN…TDSS) and 105-118 (STSN…SSST). Over residues 137–147 (TPKHGRPRLYH) the composition is skewed to basic residues. One can recognise an SMP-LTD domain in the interval 151–412 (QPESLDWFNV…EPRVQVVGLP (262 aa)). Over residues 295-312 (TSDQTMSPIPTPHDTTSE) the composition is skewed to polar residues. Residues 449-468 (GVSGGGGSGGGSGGGGGGMR) show a composition bias toward gly residues.

Belongs to the MMM1 family. Homodimer. Component of the ER-mitochondria encounter structure (ERMES) or MDM complex, composed of MMM1, MDM10, MDM12 and MDM34. An MMM1 homodimer associates with one molecule of MDM12 on each side in a pairwise head-to-tail manner, and the SMP-LTD domains of MMM1 and MDM12 generate a continuous hydrophobic tunnel for phospholipid trafficking.

It localises to the endoplasmic reticulum membrane. In terms of biological role, component of the ERMES/MDM complex, which serves as a molecular tether to connect the endoplasmic reticulum (ER) and mitochondria. Components of this complex are involved in the control of mitochondrial shape and protein biogenesis, and function in nonvesicular lipid trafficking between the ER and mitochondria. The MDM12-MMM1 subcomplex functions in the major beta-barrel assembly pathway that is responsible for biogenesis of all outer membrane beta-barrel proteins, and acts in a late step after the SAM complex. The MDM10-MDM12-MMM1 subcomplex further acts in the TOM40-specific pathway after the action of the MDM12-MMM1 complex. Essential for establishing and maintaining the structure of mitochondria and maintenance of mtDNA nucleoids. The chain is Maintenance of mitochondrial morphology protein 1 from Paracoccidioides lutzii (strain ATCC MYA-826 / Pb01) (Paracoccidioides brasiliensis).